A 310-amino-acid chain; its full sequence is tRNA-cytidine(32) 2-sulfurtransferase (310 aa).

The short motif at 45 to 50 is the PP-loop motif element; that stretch reads SGGKDS. [4Fe-4S] cluster-binding residues include Cys-120, Cys-123, and Cys-211.

This sequence belongs to the TtcA family. As to quaternary structure, homodimer. The cofactor is Mg(2+). Requires [4Fe-4S] cluster as cofactor.

The protein localises to the cytoplasm. It carries out the reaction cytidine(32) in tRNA + S-sulfanyl-L-cysteinyl-[cysteine desulfurase] + AH2 + ATP = 2-thiocytidine(32) in tRNA + L-cysteinyl-[cysteine desulfurase] + A + AMP + diphosphate + H(+). It functions in the pathway tRNA modification. Catalyzes the ATP-dependent 2-thiolation of cytidine in position 32 of tRNA, to form 2-thiocytidine (s(2)C32). The sulfur atoms are provided by the cysteine/cysteine desulfurase (IscS) system. The polypeptide is tRNA-cytidine(32) 2-sulfurtransferase (Shewanella baltica (strain OS185)).